A 384-amino-acid polypeptide reads, in one-letter code: NADH-ubiquinone oxidoreductase chain 5 (384 aa).

12 consecutive transmembrane segments (helical) span residues 12–32 (FYFLMSISLSLFLISLKFLLM), 50–70 (IVMTFLFDWMSLMFMSFVLLI), 92–112 (ILLVLMFVMSMMMLIISPNLI), 113–133 (SILLGWDGLGLVSYCLVIYFQ), 153–173 (VALLLAIAWMLNYGSWNYIFY), 183–203 (MMIIGGLVMLAAMTKSAQIPF), 215–235 (TPVSALVHSSTLVTAGVYLLI), 244–264 (WWMAQFLLLVSGLTMFMAGLG), 274–293 (IIALSTLSQLGLMMSILSMG), 298–320 (AFFHLLTHALFKALLFMCAGSII), 343–363 (CSCFNVANLALCGMPFLAGFY), and 364–384 (SKDLILEMVMLSYVNVFSFFL).

The protein belongs to the complex I subunit 5 family.

The protein resides in the mitochondrion inner membrane. The enzyme catalyses a ubiquinone + NADH + 5 H(+)(in) = a ubiquinol + NAD(+) + 4 H(+)(out). In terms of biological role, core subunit of the mitochondrial membrane respiratory chain NADH dehydrogenase (Complex I) that is believed to belong to the minimal assembly required for catalysis. Complex I functions in the transfer of electrons from NADH to the respiratory chain. The immediate electron acceptor for the enzyme is believed to be ubiquinone. The sequence is that of NADH-ubiquinone oxidoreductase chain 5 (ND5) from Anopheles arabiensis (Mosquito).